Consider the following 306-residue polypeptide: Aquaporin-1 (306 aa).

A compositionally biased stretch (polar residues) spans 1-23 (MASTHSSLTTVQNNANNKSNRTL). The segment at 1-24 (MASTHSSLTTVQNNANNKSNRTLN) is disordered. At 1–59 (MASTHSSLTTVQNNANNKSNRTLNTERRLSMESSVFTLYNKAADELDTSQRSAFQACHR) the chain is on the cytoplasmic side. A helical transmembrane segment spans residues 60-80 (EFLAEFIGTVILVLLTCGFCA). At 81–92 (EQTLHIEESKSW) the chain is on the extracellular side. A helical transmembrane segment spans residues 93-113 (LTSSFGSGLSVLIGICVSGHV). Residues 114–145 (SGAHLNPAVTIAFCIFSGFPIRKVPSYITAQL) are Cytoplasmic-facing. The NPA 1 signature appears at 119 to 121 (NPA). A helical membrane pass occupies residues 146–166 (LGAFAGAALLYIIIEPAIVQF). The Extracellular segment spans residues 167-192 (DGGQRYILGEKSTAGIFGTYPPLYVG). A helical membrane pass occupies residues 193-213 (IGSAIASEIMGTAMLLLVIMV). The Cytoplasmic segment spans residues 214–226 (TGHPNNLPYKSAQ). Residues 227-247 (GAMIALGITTISLCIGYTSGF) traverse the membrane as a helical segment. The Extracellular segment spans residues 248–278 (SLNPARDFGPRLFTAIAGWGFDVFKVYHYYA). The NPA 2 signature appears at 250–252 (NPA). The chain crosses the membrane as a helical span at residues 279–299 (LVPMFAPILGGLVGLMLMMPF). At 300–306 (SFLSVRA) the chain is on the cytoplasmic side.

It belongs to the MIP/aquaporin (TC 1.A.8) family.

The protein localises to the cell membrane. The enzyme catalyses H2O(in) = H2O(out). Functionally, water channel required to facilitate the transport of water across membranes. Contributes to water uptake of spores during the early stages of spore germination. Aquaporins AQP1 and AQP2 act as extracellular pH sensors and enable the spores to hydrate under favorable conditions and to commence germination. Wounded vegetables and fruit present acidic pH, so the optimal pH range for germination is adapted to the relevant host pH. This is Aquaporin-1 from Rhizopus delemar (strain RA 99-880 / ATCC MYA-4621 / FGSC 9543 / NRRL 43880) (Mucormycosis agent).